Reading from the N-terminus, the 354-residue chain is Anthranilate phosphoribosyltransferase (354 aa).

This sequence belongs to the anthranilate phosphoribosyltransferase family.

The catalysed reaction is N-(5-phospho-beta-D-ribosyl)anthranilate + diphosphate = 5-phospho-alpha-D-ribose 1-diphosphate + anthranilate. The protein operates within amino-acid biosynthesis; L-tryptophan biosynthesis; L-tryptophan from chorismate: step 2/5. This is Anthranilate phosphoribosyltransferase (trp4) from Schizosaccharomyces pombe (strain 972 / ATCC 24843) (Fission yeast).